A 968-amino-acid chain; its full sequence is Alanine--tRNA ligase, cytoplasmic (968 aa).

Met-1 is subject to N-acetylmethionine. Ser-3 and Ser-8 each carry phosphoserine. An N6-acetyllysine modification is found at Lys-19. Residues Arg-77, His-95, Trp-176, and 214 to 216 (IWN) contribute to the ATP site. L-alanine is bound by residues Asn-216 and Asp-239. Gly-243 is a binding site for ATP. Ser-399 and Ser-555 each carry phosphoserine. Zn(2+) contacts are provided by His-605, His-609, Cys-723, and His-727. The short motif at 750–763 (RRIVAVTGAEAQKA) is the Nuclear localization signal element. At Lys-876 the chain carries N6-acetyllysine. At Lys-943 the chain carries N6,N6,N6-trimethyllysine; alternate. At Lys-943 the chain carries N6,N6-dimethyllysine; alternate. An N6-methyllysine; alternate modification is found at Lys-943.

It belongs to the class-II aminoacyl-tRNA synthetase family. In terms of assembly, monomer. Interacts with ANKRD16; the interaction is direct. The cofactor is Zn(2+). Post-translationally, ISGylated. Methylation at 'Lys-943' by METTL21C.

Its subcellular location is the cytoplasm. It localises to the nucleus. It catalyses the reaction tRNA(Ala) + L-alanine + ATP = L-alanyl-tRNA(Ala) + AMP + diphosphate. The catalysed reaction is (S)-lactate + ATP + H(+) = (S)-lactoyl-AMP + diphosphate. It carries out the reaction (S)-lactoyl-AMP + L-lysyl-[protein] = N(6)-[(S)-lactoyl]-L-lysyl-[protein] + AMP + 2 H(+). The protein lactyltransferase activity is inhibited by beta-alanine. Functionally, catalyzes the attachment of alanine to tRNA(Ala) in a two-step reaction: alanine is first activated by ATP to form Ala-AMP and then transferred to the acceptor end of tRNA(Ala). Also edits incorrectly charged tRNA(Ala) via its editing domain. In presence of high levels of lactate, also acts as a protein lactyltransferase that mediates lactylation of lysine residues in target proteins, such as TEAD1, TP53/p53 and YAP1. Protein lactylation takes place in a two-step reaction: lactate is first activated by ATP to form lactate-AMP and then transferred to lysine residues of target proteins. Acts as an inhibitor of TP53/p53 activity by catalyzing lactylation of TP53/p53. Acts as a positive regulator of the Hippo pathway by mediating lactylation of TEAD1 and YAP1. This Homo sapiens (Human) protein is Alanine--tRNA ligase, cytoplasmic.